The sequence spans 247 residues: MNVLSYSINTLEGLYEISGVEVGQHFYWKIGGFQVHAQVLITSWVVIVILLGSAIVTVRNPQTIPTDGQNFFEYILEFIRDVSKTQIGEEYGPWVPFIGTLFLFIFVSNWSGALLPWKIIELPHGELAAPTNDINTTVALALLTSIAYFYAGLSKKGLGYFGKYIQPTPILLPINILEDFTKPLSLSFRLFGNILADELVVVVLVSLVPSVVPIPVMFLGLFTSGIQALIFATLAAAYIGESMEGHH.

Helical transmembrane passes span 38–58, 95–115, 134–154, 199–219, and 220–240; these read QVLITSWVVIVILLGSAIVTV, VPFIGTLFLFIFVSNWSGALL, INTTVALALLTSIAYFYAGLS, LVVVVLVSLVPSVVPIPVMFL, and GLFTSGIQALIFATLAAAYIG.

The protein belongs to the ATPase A chain family. F-type ATPases have 2 components, CF(1) - the catalytic core - and CF(0) - the membrane proton channel. CF(1) has five subunits: alpha(3), beta(3), gamma(1), delta(1), epsilon(1). CF(0) has four main subunits: a, b, b' and c.

Its subcellular location is the plastid. The protein resides in the chloroplast thylakoid membrane. Its function is as follows. Key component of the proton channel; it plays a direct role in the translocation of protons across the membrane. The chain is ATP synthase subunit a, chloroplastic from Populus alba (White poplar).